The chain runs to 123 residues: Con-ikot-ikot (123 aa).

The first 18 residues, 1-18, serve as a signal peptide directing secretion; it reads MAMNMSMTLCMFVMVVVA. Residues 19–37 constitute a propeptide that is removed on maturation; sequence ATVIDSTQLQEPDLSRMRR. Cystine bridges form between Cys49/Cys80, Cys50/Cys89, Cys57/Cys72, Cys90/Cys118, and Cys96/Cys113.

Homodimer; disulfide-linked. As to expression, expressed by the venom duct.

The protein localises to the secreted. Its function is as follows. Potently and selectively blocks the desensitization of ionotropic glutamate AMPA receptors (GRIA1, GRIA2, GRIA3 and GRIA4). Binds to a different site than does the drug cyclothiazide. The toxin acts like a straitjacket on the 'gating ring' of the ligand-binding domain (LBD) of the receptor. It does so by restraining the domains via both intra- and interdimer cross-links such that agonist-induced closure of the LBD 'clamshells' is transduced into an irislike expansion of the gating ring. Compared to other desensitization blockers, it is a poor stabilizer of the open channel because toxin-bound AMPA receptors undergo frequent brief closures. In vitro, application of the toxin to hippocampal slices causes a large and rapid increase in resting AMPA receptor-mediated current leading to neuronal death. In Conus striatus (Striated cone), this protein is Con-ikot-ikot.